The sequence spans 83 residues: Exodeoxyribonuclease 7 small subunit (83 aa).

The protein belongs to the XseB family. Heterooligomer composed of large and small subunits.

It is found in the cytoplasm. It catalyses the reaction Exonucleolytic cleavage in either 5'- to 3'- or 3'- to 5'-direction to yield nucleoside 5'-phosphates.. In terms of biological role, bidirectionally degrades single-stranded DNA into large acid-insoluble oligonucleotides, which are then degraded further into small acid-soluble oligonucleotides. The sequence is that of Exodeoxyribonuclease 7 small subunit from Allorhizobium ampelinum (strain ATCC BAA-846 / DSM 112012 / S4) (Agrobacterium vitis (strain S4)).